Reading from the N-terminus, the 28-residue chain is Heat shock protein 81 (28 aa).

The ATP site is built by asparagine 5 and aspartate 21.

Belongs to the heat shock protein 90 family. Homodimer.

It is found in the cytoplasm. In terms of biological role, putative molecular chaperone that may promote the maturation, structural maintenance and proper regulation of specific target proteins. This is Heat shock protein 81 from Pseudotsuga menziesii (Douglas-fir).